Consider the following 362-residue polypeptide: Putative integrase ORF3 (362 aa).

Residues Tyr-179 to Ser-359 form the Integrase catalytic domain. The Mg(2+) site is built by Asp-190 and Asp-256.

This sequence belongs to the plectrovirus integrase ORF3 family.

Its function is as follows. This protein may encode an integrase, which is necessary for integration of the viral DNA into host genome. In Spiroplasma melliferum (SpV1), this protein is Putative integrase ORF3.